The chain runs to 505 residues: AMP phosphorylase (505 aa).

AMP contacts are provided by residues G170, 196–201 (SRAITS), and T205. The active-site Proton donor is the D258. Residues S266 and K290 each contribute to the AMP site.

It belongs to the thymidine/pyrimidine-nucleoside phosphorylase family. Type 2 subfamily.

It carries out the reaction AMP + phosphate = alpha-D-ribose 1,5-bisphosphate + adenine. The catalysed reaction is CMP + phosphate = cytosine + alpha-D-ribose 1,5-bisphosphate. The enzyme catalyses UMP + phosphate = alpha-D-ribose 1,5-bisphosphate + uracil. Catalyzes the conversion of AMP and phosphate to adenine and ribose 1,5-bisphosphate (R15P). Exhibits phosphorylase activity toward CMP and UMP in addition to AMP. Functions in an archaeal AMP degradation pathway, together with R15P isomerase and RubisCO. The chain is AMP phosphorylase from Methanococcus vannielii (strain ATCC 35089 / DSM 1224 / JCM 13029 / OCM 148 / SB).